The sequence spans 165 residues: V-type proton ATPase 16 kDa proteolipid subunit (165 aa).

Residues 1–10 (MSSTFSGDET) are Lumenal-facing. Residues 11–33 (APFFGFLGAAAALVFSCMGAAYG) traverse the membrane as a helical segment. Residues 34–55 (TAKSGVGVASMGVMRPELVMKS) lie on the Cytoplasmic side of the membrane. A helical transmembrane segment spans residues 56 to 76 (IVPVVMAGVLGIYGLIIAVII). Residues 77 to 95 (STGINPKAKSYYLFDGYAH) lie on the Lumenal side of the membrane. A helical transmembrane segment spans residues 96-117 (LSSGLACGLAGLSAGMAIGIVG). The Cytoplasmic segment spans residues 118 to 129 (DAGVRANAQQPK). The chain crosses the membrane as a helical span at residues 130–155 (LFVGMILILIFAEALALYGLIVGIIL). Residues 156 to 165 (SSRAGQSRAD) lie on the Lumenal side of the membrane.

It belongs to the V-ATPase proteolipid subunit family. In terms of assembly, V-ATPase is a heteromultimeric enzyme composed of a peripheral catalytic V1 complex (main components: subunits A, B, C, D, E, and F) attached to an integral membrane V0 proton pore complex (main component: the proteolipid protein; which is present as a hexamer that forms the proton-conducting pore). As to expression, higher expression in leaves, followed by roots and weakly in flowers. Expression in leaves is light-dependent.

The protein localises to the vacuole membrane. Functionally, proton-conducting pore forming subunit of the membrane integral V0 complex of vacuolar ATPase. V-ATPase is responsible for acidifying a variety of intracellular compartments in eukaryotic cells. Necessary for the crassulacean acid metabolism. This Kalanchoe daigremontiana (Devil's backbone) protein is V-type proton ATPase 16 kDa proteolipid subunit.